The chain runs to 172 residues: Shikimate kinase (172 aa).

11–16 provides a ligand contact to ATP; it reads GSGKTT. Threonine 15 is a Mg(2+) binding site. Positions 33, 57, and 79 each coordinate substrate. An ATP-binding site is contributed by arginine 117. Arginine 136 is a binding site for substrate.

It belongs to the shikimate kinase family. As to quaternary structure, monomer. Requires Mg(2+) as cofactor.

It localises to the cytoplasm. It catalyses the reaction shikimate + ATP = 3-phosphoshikimate + ADP + H(+). It functions in the pathway metabolic intermediate biosynthesis; chorismate biosynthesis; chorismate from D-erythrose 4-phosphate and phosphoenolpyruvate: step 5/7. Functionally, catalyzes the specific phosphorylation of the 3-hydroxyl group of shikimic acid using ATP as a cosubstrate. This chain is Shikimate kinase, found in Caldicellulosiruptor bescii (strain ATCC BAA-1888 / DSM 6725 / KCTC 15123 / Z-1320) (Anaerocellum thermophilum).